A 64-amino-acid chain; its full sequence is Large ribosomal subunit protein bL33 (64 aa).

This sequence belongs to the bacterial ribosomal protein bL33 family.

This Rippkaea orientalis (strain PCC 8801 / RF-1) (Cyanothece sp. (strain PCC 8801)) protein is Large ribosomal subunit protein bL33.